A 602-amino-acid chain; its full sequence is MPYKLKKEKEPPKVAKCTAKPSSSGKDGGGENTEEAQPQPQPQPQPQAQSQPPSSNKRPSNSTPPPTQLSKIKYSGGPQIVKKERRQSSSRFNLSKNRELQKLPALKDSPTQEREELFIQKLRQCCVLFDFVSDPLSDLKFKEVKRAGLNEMVEYITHSRDVVTEAIYPEAVTMFSVNLFRTLPPSSNPTGAEFDPEEDEPTLEAAWPHLQLVYEFFLRFLESPDFQPNIAKKYIDQKFVLALLDLFDSEDPRERDFLKTILHRIYGKFLGLRAYIRRQINHIFYRFIYETEHHNGIAELLEILGSIINGFALPLKEEHKMFLIRVLLPLHKVKSLSVYHPQLAYCVVQFLEKESSLTEPVIVGLLKFWPKTHSPKEVMFLNELEEILDVIEPSEFSKVMEPLFRQLAKCVSSPHFQVAERALYYWNNEYIMSLISDNAARVLPIMFPALYRNSKSHWNKTIHGLIYNALKLFMEMNQKLFDDCTQQYKAEKQKGRFRMKEREEMWQKIEELARLNPQYPMFRAPPPLPPVYSMETETPTAEDIQLLKRTVETEAVQMLKDIKKEKVLLRRKSELPQDVYTIKALEAHKRAEEFLTASQEAL.

Basic and acidic residues predominate over residues 1 to 13 (MPYKLKKEKEPPK). The interval 1 to 96 (MPYKLKKEKE…QSSSRFNLSK (96 aa)) is disordered. 5 tandem repeats follow at residues 37–38 (QP), 39–40 (QP), 41–42 (QP), 43–44 (QP), and 45–46 (QP). The tract at residues 37–52 (QPQPQPQPQPQAQSQP) is 8 X 2 AA approximate tandem repeats of Q-P. A compositionally biased stretch (low complexity) spans 46-55 (PQAQSQPPSS). One copy of the 6; approximate repeat lies at 47–48 (QA). The 7; approximate repeat unit spans residues 49 to 50 (QS). Repeat unit 8 spans residues 51–52 (QP). Threonine 63 carries the post-translational modification Phosphothreonine. Residues serine 88, serine 89, and serine 90 each carry the phosphoserine modification. Residues 523-530 (RAPPPLPP) carry the SH3-binding; class I motif. The Nuclear localization signal motif lies at 548–565 (KRTVETEAVQMLKDIKKE). Phosphoserine is present on residues serine 573 and serine 598.

Belongs to the phosphatase 2A regulatory subunit B56 family. As to quaternary structure, PP2A consists of a common heterodimeric core enzyme, composed of a 36 kDa catalytic subunit (subunit C) and a 65 kDa constant regulatory subunit (PR65 or subunit A), that associates with a variety of regulatory subunits. Proteins that associate with the core dimer include three families of regulatory subunits B (the R2/B/PR55/B55, R3/B''/PR72/PR130/PR59 and R5/B'/B56 families), the 48 kDa variable regulatory subunit, viral proteins, and cell signaling molecules. Interacts with the PP2A A subunit PPP2R1A. Interacts with SGO1. Interacts with ADCY8. As to expression, isoform Delta-2 is widely expressed. Isoform Delta-1 is highly expressed in brain.

It is found in the cytoplasm. The protein localises to the nucleus. Functionally, the B regulatory subunit might modulate substrate selectivity and catalytic activity, and might also direct the localization of the catalytic enzyme to a particular subcellular compartment. In Homo sapiens (Human), this protein is Serine/threonine-protein phosphatase 2A 56 kDa regulatory subunit delta isoform (PPP2R5D).